The primary structure comprises 395 residues: Elongation factor Tu (395 aa).

Residues 10–204 (KPHVNIGTIG…TVDSYIPEPK (195 aa)) enclose the tr-type G domain. The tract at residues 19-26 (GHVDHGKT) is G1. A GTP-binding site is contributed by 19-26 (GHVDHGKT). Position 26 (Thr26) interacts with Mg(2+). The interval 60–64 (GITIN) is G2. The segment at 81-84 (DAPG) is G3. GTP-binding positions include 81-85 (DAPGH) and 136-139 (NKTD). The interval 136-139 (NKTD) is G4. The tract at residues 174–176 (SAL) is G5.

Belongs to the TRAFAC class translation factor GTPase superfamily. Classic translation factor GTPase family. EF-Tu/EF-1A subfamily. In terms of assembly, monomer.

It localises to the cytoplasm. It carries out the reaction GTP + H2O = GDP + phosphate + H(+). Its function is as follows. GTP hydrolase that promotes the GTP-dependent binding of aminoacyl-tRNA to the A-site of ribosomes during protein biosynthesis. The protein is Elongation factor Tu of Leuconostoc citreum (strain KM20).